We begin with the raw amino-acid sequence, 202 residues long: FMN reductase (NADH) RutF (202 aa).

Low complexity predominate over residues 168-191 (PRAPRGGSAPAEPARGARAIGARP). Residues 168–202 (PRAPRGGSAPAEPARGARAIGARPPEGPVLALRSA) are disordered.

The protein belongs to the non-flavoprotein flavin reductase family. RutF subfamily.

The catalysed reaction is FMNH2 + NAD(+) = FMN + NADH + 2 H(+). In terms of biological role, catalyzes the reduction of FMN to FMNH2 which is used to reduce pyrimidine by RutA via the Rut pathway. This is FMN reductase (NADH) RutF from Methylorubrum populi (strain ATCC BAA-705 / NCIMB 13946 / BJ001) (Methylobacterium populi).